A 78-amino-acid chain; its full sequence is Putative Fe(2+) transport protein A (78 aa).

It belongs to the FeoA family.

Might be involved in Fe(2+) ion uptake. The sequence is that of Putative Fe(2+) transport protein A from Helicobacter pylori (strain J99 / ATCC 700824) (Campylobacter pylori J99).